Here is a 550-residue protein sequence, read N- to C-terminus: Zinc finger protein squeeze (550 aa).

A compositionally biased stretch (low complexity) spans 73–105; sequence QQQQQQQQQEMLQQQQQHQAHQEQQQQQQQQQQ. The segment at 73-179 is disordered; the sequence is QQQQQQQQQE…GGGGGDGDQS (107 aa). Basic residues predominate over residues 106 to 117; the sequence is QHHHQQQQHHLK. The span at 141 to 156 shows a compositional bias: polar residues; the sequence is RSPQRPLMSSGSNASS. The span at 164-176 shows a compositional bias: gly residues; sequence SGGGPGGGGGGDG. C2H2-type zinc fingers lie at residues 182-204, 210-232, 238-262, 268-290, and 299-321; these read YKCA…TRIH, YRCE…IRTH, YKCR…SRCH, FKCN…IPKH, and HICN…LQKH. Residues 399-485 form a disordered region; sequence LQQHQQQQQQ…VPPSHLQQHR (87 aa). The span at 400–416 shows a compositional bias: low complexity; it reads QQHQQQQQQQQQDMLQQ. Thr-424 is subject to Phosphothreonine. 2 positions are modified to phosphoserine: Ser-428 and Ser-430. Residues 444–460 show a composition bias toward low complexity; it reads QTTPQHHLQQQQQQQQP. 2 positions are modified to phosphotyrosine: Tyr-494 and Tyr-496.

The protein belongs to the krueppel C2H2-type zinc-finger protein family. As to quaternary structure, interacts with nab; which acts as a coactivator. Interacts with ap.

It is found in the nucleus. Functionally, transcription factor involved in neuronal fate specification. First required in embryonic CNS development to define the number of cells that express apterous (ap) in the ap thoracic cluster of interneurons. Later on, it plays a central role in the combinatorial code of transcription factors that specifies the fate of the Tv neuron in the ap cluster by participating in the transcription regulation of FMRFa in Tv cells. Also required for projection neuron dendritic targeting. The sequence is that of Zinc finger protein squeeze (sqz) from Drosophila pseudoobscura pseudoobscura (Fruit fly).